The primary structure comprises 609 residues: Alpha-fetoprotein (609 aa).

Positions 1–18 are cleaved as a signal peptide; the sequence is MKWVESIFLIFLLNFTES. 3 consecutive Albumin domains span residues 19–210, 211–402, and 403–601; these read RTLH…ATVT, KELR…EELQ, and KYIQ…KLIS. A Cu(2+)-binding site is contributed by H22. Intrachain disulfides connect C99–C114, C113–C124, C148–C193, C192–C201, C224–C270, C269–C277, C289–C303, and C302–C313. Residues S111, S115, and S117 each carry the phosphoserine; by FAM20C modification. N-linked (GlcNAc...) asparagine glycosylation occurs at N251. S344 carries the post-translational modification Phosphoserine; by FAM20C. 7 disulfides stabilise this stretch: C384–C393, C416–C462, C461–C472, C485–C501, C500–C511, C538–C583, and C582–C591. Phosphoserine; by FAM20C is present on residues S444 and S445.

The protein belongs to the ALB/AFP/VDB family. Dimeric and trimeric forms have been found in addition to the monomeric form. In terms of processing, independent studies suggest heterogeneity of the N-terminal sequence of the mature protein and of the cleavage site of the signal sequence. Post-translationally, sulfated. In terms of tissue distribution, plasma. Synthesized by the fetal liver and yolk sac.

The protein resides in the secreted. In terms of biological role, binds copper, nickel, and fatty acids as well as, and bilirubin less well than, serum albumin. Only a small percentage (less than 2%) of the human AFP shows estrogen-binding properties. The chain is Alpha-fetoprotein (AFP) from Homo sapiens (Human).